A 209-amino-acid chain; its full sequence is uncharacterized protein (209 aa).

The tract at residues 177-209 (DNSDNSSDSDDSDSLDGSDDLNDSDNVDNLFVG) is disordered. The span at 183–202 (SDSDDSDSLDGSDDLNDSDN) shows a compositional bias: acidic residues.

This is an uncharacterized protein from Acanthamoeba polyphaga (Amoeba).